Here is a 100-residue protein sequence, read N- to C-terminus: Nucleoid-associated protein MYPU_0500 (100 aa).

Belongs to the YbaB/EbfC family. Homodimer.

Its subcellular location is the cytoplasm. It localises to the nucleoid. Functionally, binds to DNA and alters its conformation. May be involved in regulation of gene expression, nucleoid organization and DNA protection. This chain is Nucleoid-associated protein MYPU_0500, found in Mycoplasmopsis pulmonis (strain UAB CTIP) (Mycoplasma pulmonis).